Here is a 150-residue protein sequence, read N- to C-terminus: Flagellar assembly factor FliW (150 aa).

It belongs to the FliW family. Interacts with translational regulator CsrA and flagellin(s).

The protein localises to the cytoplasm. In terms of biological role, acts as an anti-CsrA protein, binds CsrA and prevents it from repressing translation of its target genes, one of which is flagellin. Binds to flagellin and participates in the assembly of the flagellum. This is Flagellar assembly factor FliW from Leptospira borgpetersenii serovar Hardjo-bovis (strain JB197).